The primary structure comprises 150 residues: Large ribosomal subunit protein bL9 (150 aa).

This sequence belongs to the bacterial ribosomal protein bL9 family.

In terms of biological role, binds to the 23S rRNA. The sequence is that of Large ribosomal subunit protein bL9 from Streptococcus sanguinis (strain SK36).